The sequence spans 481 residues: Hyaluronidase-4 (481 aa).

The Cytoplasmic segment spans residues 1 to 8 (MKVLSEGQ). The helical transmembrane segment at 9 to 29 (LKLCVVQPVHLTSWLLIFFIL) threads the bilayer. The Extracellular portion of the chain corresponds to 30-453 (KSISCLKPAR…ADCREIKTAD (424 aa)). 5 disulfide bridges follow: Cys59–Cys351, Cys223–Cys237, Cys376–Cys387, Cys381–Cys435, and Cys437–Cys446. 2 N-linked (GlcNAc...) asparagine glycosylation sites follow: Asn86 and Asn115. Glu147 functions as the Proton donor in the catalytic mechanism. A glycan (N-linked (GlcNAc...) (complex) asparagine) is linked at Asn177. An N-linked (GlcNAc...) asparagine glycan is attached at Asn343. Residues 454-474 (GCSGVSPSPGSLMTLCLLLLA) form a helical membrane-spanning segment. At 475–481 (SYRSIQL) the chain is on the cytoplasmic side.

This sequence belongs to the glycosyl hydrolase 56 family. In terms of tissue distribution, detected in placenta and skeletal muscle.

It localises to the membrane. It catalyses the reaction Random hydrolysis of (1-&gt;4)-linkages between N-acetyl-beta-D-glucosamine and D-glucuronate residues in hyaluronate.. In terms of biological role, endo-hyaluronidase that degrades hyaluronan to smaller oligosaccharide fragments. Also has chondroitin sulfate hydrolase activity, The best substrate being the galactosaminidic linkage in the sequence of a trisulfated tetrasaccharide. In Homo sapiens (Human), this protein is Hyaluronidase-4 (HYAL4).